We begin with the raw amino-acid sequence, 549 residues long: Rhodopsin kinase grk7a (549 aa).

At S33 the chain carries Phosphoserine. The region spanning 53 to 171 is the RGS domain; it reads FESLCEKQPI…QASPFFDKFL (119 aa). In terms of domain architecture, Protein kinase spans 186–449; that stretch reads FYEFRTLGKG…NDDPRKHEWF (264 aa). ATP is bound by residues 192–200 and K215; that span reads LGKGGFGEV. The active-site Proton acceptor is the D311. An AGC-kinase C-terminal domain is found at 450 to 515; it reads KSINFARLEA…GAVSIAWQQE (66 aa). Positions 522-549 are disordered; that stretch reads FDELSDPNRKESSGGSDDDKKSGTCTLL. Basic and acidic residues predominate over residues 527–543; that stretch reads DPNRKESSGGSDDDKKS. A Cysteine methyl ester modification is found at C546. The S-geranylgeranyl cysteine moiety is linked to residue C546. A propeptide spans 547–549 (removed in mature form); the sequence is TLL.

It belongs to the protein kinase superfamily. AGC Ser/Thr protein kinase family. GPRK subfamily. Phosphorylation at Ser-33 is regulated by light and activated by cAMP.

It is found in the membrane. The enzyme catalyses L-threonyl-[rhodopsin] + ATP = O-phospho-L-threonyl-[rhodopsin] + ADP + H(+). The catalysed reaction is L-seryl-[rhodopsin] + ATP = O-phospho-L-seryl-[rhodopsin] + ADP + H(+). In terms of biological role, retina-specific kinase involved in the shutoff of the photoresponse and adaptation to changing light conditions via cone opsin phosphorylation, including rhodopsin (RHO). The polypeptide is Rhodopsin kinase grk7a (grk7a) (Danio rerio (Zebrafish)).